Consider the following 112-residue polypeptide: Protein NIM1-INTERACTING 3 (112 aa).

Disordered regions lie at residues 1 to 20 (MDRDRKRVKMEKEDDEEEKM) and 77 to 112 (EKAANESSSASNEYDGSKEKQEGSETNVCLDLNLSL). Coiled-coil stretches lie at residues 1–35 (MDRDRKRVKMEKEDDEEEKMEKLYTVLKNAREMRK) and 69–96 (NKAEANNIEKAANESSSASNEYDGSKEK). The span at 77–89 (EKAANESSSASNE) shows a compositional bias: low complexity.

Belongs to the NPR1-interactor family. As to quaternary structure, interacts with NPR1 C-terminal region.

It is found in the nucleus. This chain is Protein NIM1-INTERACTING 3, found in Arabidopsis thaliana (Mouse-ear cress).